The primary structure comprises 593 residues: Glyoxylate carboligase (593 aa).

This sequence belongs to the TPP enzyme family. In terms of assembly, homotetramer. Mg(2+) is required as a cofactor. Requires thiamine diphosphate as cofactor.

It carries out the reaction 2 glyoxylate + H(+) = 2-hydroxy-3-oxopropanoate + CO2. Its pathway is organic acid metabolism; glycolate degradation; 3-phospho-D-glycerate from glycolate: step 2/4. Its function is as follows. Catalyzes the condensation of two molecules of glyoxylate to give 2-hydroxy-3-oxopropanoate (also termed tartronate semialdehyde). This chain is Glyoxylate carboligase (gcl), found in Escherichia coli O157:H7.